The primary structure comprises 543 residues: Rop guanine nucleotide exchange factor 11 (543 aa).

The disordered stretch occupies residues 61–89 (QPGKCGSVDRPSLPIGGVTPNRNDKLPRV). The PRONE domain maps to 95–456 (MEALIILQAA…QLTQEPTNNA (362 aa)).

As to quaternary structure, interacts with ARAC4/ROP2, ARAC3/ROP, ARAC9/ROP8, PHYA and PHYB. In terms of tissue distribution, highly expressed in elongating regions of roots and pollen grains. Expressed in flowers, and at lower levels in leaves and stems.

The protein resides in the cytoplasm. Functionally, guanine-nucleotide exchange factor (GEF) that acts as an activator of Rop (Rho of plants) GTPases by promoting the exchange of GDP for GTP. Functions as a light-signaling switch that functions in root growth and development through the activation of Rop in a phytochrome-dependent manner. May act as a negative regulator of phytochrome-mediated primary root development. The chain is Rop guanine nucleotide exchange factor 11 (ROPGEF11) from Arabidopsis thaliana (Mouse-ear cress).